A 252-amino-acid chain; its full sequence is MGFLQDKVVIITGAAAGIGLATATAALDEGARVFGIDLAPAPTSLQENPNFEFLRADLTDHDCPKRAVQACIAAFGQRIDGLLNVAGIADNYGSADSVTDEVWDRCLAVNLAAPVKLMREVIPIMREAGKGSIVNTSSKAGLSGASSGVAYTASKHGLIGVTKNVAWRFKTEGIRCNAISVATEMGMTGDFSLWDQAAMEAMRPIHAAHMDMGIGATIKAEEVAQTLLFLVSDLSRRVNGAVIPVDDAWSTI.

An N-terminal signal peptide occupies residues Met1–Ala25. Ile11, Asp57, and Arg119 together coordinate NADP(+). The active-site Proton donor is the Ser137. Residues Tyr151 and Lys155 each contribute to the NADP(+) site. The active-site Proton acceptor is Tyr151. The active-site Lowers pKa of active site Tyr is the Lys155.

Belongs to the short-chain dehydrogenases/reductases (SDR) family.

Its pathway is secondary metabolite biosynthesis; terpenoid biosynthesis. In terms of biological role, short chain dehydrogenase; part of the gene cluster that mediates the biosynthesis of anditomin, a fungal meroterpenoid. The first step of the pathway is the synthesis of 3,5-dimethylorsellinic acid (DMOA) by the polyketide synthase andM. DMOA is then converted to the phthalide compound 5,7-dihydroxy-4,6-dimethylphthalide (DHDMP) by the cytochrome P450 monooxygenase andK, which is further prenylated by the prenyltransferase andD to yield farnesyl-DHDMP. Further epoxidation by the FAD-dependent monooxygenase andE leads to epoxyfarnesyl-DHDMP. The next step involves the terpene cyclase andB that converts epoxyfarnesyl-DHDMP into preandiloid A through opening of the epoxide ring followed by the cyclization of the farnesyl moiety. Preandiloid A is in turn oxidized at the C-3 hydroxyl group to yield preandiloid B by the dehydrogenase andC. The dioxygenase andA is solely responsible for the dehydrogenation of preandiloid B leading to the enone preandiloid C, as well as for the intriguing structural rearrangement to generate the bicyclo[2.2.2]octane core, transforming preandiloid C into andiconin. FAD-binding monooxygenase andJ then produces andilesin D which is reduced by dehydrogenase andI to yield andilesin A. Action of acetyltransferase andG followed by a spontaneous acetate elimination leads then to andilesin B, which is in turn substrate of the short chain dehydrogenase andH to yield andilesin C. Finally, the dioxygenase andF catalyzes the transformation of andilesin C to anditomin. The sequence is that of Short chain dehydrogenase andC from Emericella variicolor (Aspergillus stellatus).